Here is a 333-residue protein sequence, read N- to C-terminus: Small ribosomal subunit protein uS2 (333 aa).

The protein belongs to the universal ribosomal protein uS2 family.

The polypeptide is Small ribosomal subunit protein uS2 (Azorhizobium caulinodans (strain ATCC 43989 / DSM 5975 / JCM 20966 / LMG 6465 / NBRC 14845 / NCIMB 13405 / ORS 571)).